The primary structure comprises 281 residues: NAD kinase (281 aa).

D61 (proton acceptor) is an active-site residue. Residues 61 to 62, 134 to 135, R145, D164, 175 to 180, and Q234 each bind NAD(+); these read DG, ND, and TAYSLS.

It belongs to the NAD kinase family. A divalent metal cation is required as a cofactor.

It is found in the cytoplasm. The catalysed reaction is NAD(+) + ATP = ADP + NADP(+) + H(+). Involved in the regulation of the intracellular balance of NAD and NADP, and is a key enzyme in the biosynthesis of NADP. Catalyzes specifically the phosphorylation on 2'-hydroxyl of the adenosine moiety of NAD to yield NADP. In Clostridium botulinum (strain Loch Maree / Type A3), this protein is NAD kinase.